The chain runs to 344 residues: Small ribosomal subunit protein bS1m (344 aa).

S327 is subject to Phosphoserine.

This sequence belongs to the bacterial ribosomal protein bS1 family. Component of the mitochondrial small ribosomal subunit (mt-SSU). Mature yeast 74S mitochondrial ribosomes consist of a small (37S) and a large (54S) subunit. The 37S small subunit contains a 15S ribosomal RNA (15S mt-rRNA) and 34 different proteins. The 54S large subunit contains a 21S rRNA (21S mt-rRNA) and 46 different proteins.

It is found in the mitochondrion. Functionally, component of the mitochondrial ribosome (mitoribosome), a dedicated translation machinery responsible for the synthesis of mitochondrial genome-encoded proteins, including at least some of the essential transmembrane subunits of the mitochondrial respiratory chain. The mitoribosomes are attached to the mitochondrial inner membrane and translation products are cotranslationally integrated into the membrane. bS1m functionally interacts with the 5'-UTR of mitochondrial mRNAs. The chain is Small ribosomal subunit protein bS1m (MRP51) from Saccharomyces cerevisiae (strain ATCC 204508 / S288c) (Baker's yeast).